The primary structure comprises 152 residues: Ribosome maturation factor RimP (152 aa).

This sequence belongs to the RimP family.

Its subcellular location is the cytoplasm. Required for maturation of 30S ribosomal subunits. This is Ribosome maturation factor RimP from Porphyromonas gingivalis (strain ATCC BAA-308 / W83).